The primary structure comprises 491 residues: NADH-quinone oxidoreductase subunit N (491 aa).

14 helical membrane-spanning segments follow: residues 11-31 (ATAEIFVAVMALVIMLATTFA), 38-58 (LAYGLTLVTLIGAAIITYNTA), 74-94 (LLGDVLKLLIYFSMAVALLYG), 106-126 (PEYYVLALLMTLGMMVMVTSN), 128-148 (LLSMYIGLELMSLSLYALVAF), 163-183 (FVLGALASGLLLYGMSMLYGA), 206-226 (LLFGLVFLMAGICFKLGVVPF), 243-263 (LIIATAPKLAAFAMAVRLLVW), 272-292 (WQTMLMFVAVLSIVLGNLAAI), 301-321 (LAYSGISHMGFMLLGLLSGVV), 336-356 (MFYAISYVIMSLASFGMIILL), 379-399 (FAAMMMFVMFSMAGIPFFIGF), 410-430 (VAAGYIWVAVVAVLMSVIGAF), and 465-485 (LAIAAIGLAPQGVMTLCTFVL).

The protein belongs to the complex I subunit 2 family. As to quaternary structure, NDH-1 is composed of 14 different subunits. Subunits NuoA, H, J, K, L, M, N constitute the membrane sector of the complex.

It is found in the cell inner membrane. The catalysed reaction is a quinone + NADH + 5 H(+)(in) = a quinol + NAD(+) + 4 H(+)(out). In terms of biological role, NDH-1 shuttles electrons from NADH, via FMN and iron-sulfur (Fe-S) centers, to quinones in the respiratory chain. The immediate electron acceptor for the enzyme in this species is believed to be ubiquinone. Couples the redox reaction to proton translocation (for every two electrons transferred, four hydrogen ions are translocated across the cytoplasmic membrane), and thus conserves the redox energy in a proton gradient. The protein is NADH-quinone oxidoreductase subunit N of Azoarcus sp. (strain BH72).